Reading from the N-terminus, the 87-residue chain is Retinal rod rhodopsin-sensitive cGMP 3',5'-cyclic phosphodiesterase subunit gamma (87 aa).

Methionine 1 is subject to N-acetylmethionine. Over residues 1 to 12 (MNLEPPKAEIRS) the composition is skewed to basic and acidic residues. The disordered stretch occupies residues 1-55 (MNLEPPKAEIRSATRVMGGPVTPRKGPPKFKQRQTRQFKSKPPKKGVQGFGDDIP). The segment covering 26-44 (GPPKFKQRQTRQFKSKPPK) has biased composition (basic residues).

Belongs to the rod/cone cGMP-PDE gamma subunit family. Oligomer composed of two catalytic chains (alpha and beta), an inhibitory chain (gamma) and the delta chain.

It catalyses the reaction 3',5'-cyclic GMP + H2O = GMP + H(+). Functionally, participates in processes of transmission and amplification of the visual signal. cGMP-PDEs are the effector molecules in G-protein-mediated phototransduction in vertebrate rods and cones. This chain is Retinal rod rhodopsin-sensitive cGMP 3',5'-cyclic phosphodiesterase subunit gamma (PDE6G), found in Bos taurus (Bovine).